The following is an 844-amino-acid chain: Lysine-specific histone demethylase 1 homolog 1 (844 aa).

A compositionally biased stretch (basic and acidic residues) spans 1–18; the sequence is MSTETKETRPETKPEDLG. Residues 1–131 are disordered; the sequence is MSTETKETRP…PGPRARKRRR (131 aa). Residues 26-40 show a composition bias toward acidic residues; it reads PGEEPLGELIADDVN. Composition is skewed to polar residues over residues 46 to 62 and 107 to 118; these read ASAT…QSEQ and DLVTEQQSQNPN. The region spanning 154–255 is the SWIRM domain; that stretch reads GKEVDSEALI…FGLAPVIKEA (102 aa). FAD-binding residues include E295, R297, and R303. The Nuclear localization signal signature appears at 516 to 523; sequence LKKGSIEF. E679 is an FAD binding site.

This sequence belongs to the flavin monoamine oxidase family. Interacts with CZS. Interacts with OTU6/OTLD1. Requires FAD as cofactor. As to expression, expressed in the shoot and root apical regions of young seedlings. Expressed in cotyledons and inflorescences.

It is found in the nucleus. The protein resides in the cytoplasm. In terms of biological role, probable histone demethylase that reduces the levels of histone H3 'Lys-4' methylation in chromatin of the floral repressor FLOWERING LOCUS C (FLC) and the sporophytically silenced floral repressor FWA. Seems to act in partial redundancy with FLOWERING LOCUS D (FLD) to repress FLC expression. Required for cytosine methylation of FWA. Controls primary seed dormancy by regulating DOG1 and abscisic acid signaling-related genes. In association with OTU6/OTLD1, involved in transcriptional gene repression via histone deubiquitination and demethylation. In Arabidopsis thaliana (Mouse-ear cress), this protein is Lysine-specific histone demethylase 1 homolog 1.